Here is a 622-residue protein sequence, read N- to C-terminus: V-type ATP synthase subunit I 1 (622 aa).

A run of 8 helical transmembrane segments spans residues 306 to 326, 328 to 348, 373 to 393, 428 to 448, 459 to 479, 485 to 505, 532 to 552, and 562 to 582; these read WVNLISPLMNFLGTVPGYWEV, ISGFFLLFFGVFFSIIFADAG, PAWCLGLYLGTLTMVWGALVC, QMHVCFFLGLLHLCLGHLIVV, AEFGSLLMLGGMYVVVLNLIV, PLTGMIVGSIIAGFVLNFIFV, VFADVMSYIRLWAVGLAGGAI, and PLFANFLAFLGIVLLLFGHGL.

Belongs to the V-ATPase 116 kDa subunit family.

The protein localises to the cell membrane. Its function is as follows. Produces ATP from ADP in the presence of a proton gradient across the membrane. This is V-type ATP synthase subunit I 1 (atpI1) from Treponema pallidum (strain Nichols).